The sequence spans 497 residues: GDP-fucose protein O-fucosyltransferase 4 (497 aa).

Over 1–6 (MACRRR) the chain is Cytoplasmic. The chain crosses the membrane as a helical; Signal-anchor for type II membrane protein span at residues 7–27 (LLPCAGLGLFGVLCWVWVSFA). Residues 28 to 497 (SFPDDQLPLE…ITERRARGKH (470 aa)) are Lumenal-facing. N-linked (GlcNAc...) asparagine glycosylation is present at Asn169. Residues Cys392 and Cys395 are joined by a disulfide bond. The tract at residues 406–427 (RAHRKDPERNPPPLPKMASNSH) is disordered. Residue Asn474 is glycosylated (N-linked (GlcNAc...) asparagine).

This sequence belongs to the glycosyltransferase 10 family.

Its subcellular location is the endoplasmic reticulum membrane. It catalyses the reaction L-threonyl-[protein] + GDP-beta-L-fucose = 3-O-(alpha-L-fucosyl)-L-threonyl-[protein] + GDP + H(+). The catalysed reaction is L-seryl-[protein] + GDP-beta-L-fucose = 3-O-(alpha-L-fucosyl)-L-seryl-[protein] + GDP + H(+). The protein operates within protein modification; protein glycosylation. In terms of biological role, protein O-fucosyltransferase that specifically catalyzes O-fucosylation of serine or threonine residues in EMI domains of target proteins. Attaches fucose through an O-glycosidic linkage. O-fucosylation of EMI domain-containing proteins may be required for facilitating protein folding and secretion. The polypeptide is GDP-fucose protein O-fucosyltransferase 4 (fut11) (Oryzias latipes (Japanese rice fish)).